The chain runs to 438 residues: Histidinol dehydrogenase (438 aa).

Positions 129, 193, and 216 each coordinate NAD(+). Positions 239, 261, and 264 each coordinate substrate. Residues Gln261 and His264 each contribute to the Zn(2+) site. Catalysis depends on proton acceptor residues Glu330 and His331. Substrate contacts are provided by His331, Asp364, Glu418, and His423. Position 364 (Asp364) interacts with Zn(2+). His423 provides a ligand contact to Zn(2+).

It belongs to the histidinol dehydrogenase family. The cofactor is Zn(2+).

It catalyses the reaction L-histidinol + 2 NAD(+) + H2O = L-histidine + 2 NADH + 3 H(+). Its pathway is amino-acid biosynthesis; L-histidine biosynthesis; L-histidine from 5-phospho-alpha-D-ribose 1-diphosphate: step 9/9. Catalyzes the sequential NAD-dependent oxidations of L-histidinol to L-histidinaldehyde and then to L-histidine. In Thermobifida fusca (strain YX), this protein is Histidinol dehydrogenase.